The chain runs to 668 residues: Alpha-1,4-glucan:maltose-1-phosphate maltosyltransferase (668 aa).

Positions 263-288 (RKGRNNSLTPAPDDPGSPYAIGSEEG) are disordered. The alpha-maltose 1-phosphate site is built by Lys264, Gln324, and Asp359. The Nucleophile role is filled by Asp395. Asn396 serves as a coordination point for alpha-maltose 1-phosphate. Residue Glu424 is the Proton donor of the active site. 535–536 (KY) contributes to the alpha-maltose 1-phosphate binding site.

The protein belongs to the glycosyl hydrolase 13 family. GlgE subfamily. In terms of assembly, homodimer.

It carries out the reaction alpha-maltose 1-phosphate + [(1-&gt;4)-alpha-D-glucosyl](n) = [(1-&gt;4)-alpha-D-glucosyl](n+2) + phosphate. Maltosyltransferase that uses maltose 1-phosphate (M1P) as the sugar donor to elongate linear or branched alpha-(1-&gt;4)-glucans. Is involved in a branched alpha-glucan biosynthetic pathway from trehalose, together with TreS, Mak and GlgB. In Cereibacter sphaeroides (strain ATCC 17023 / DSM 158 / JCM 6121 / CCUG 31486 / LMG 2827 / NBRC 12203 / NCIMB 8253 / ATH 2.4.1.) (Rhodobacter sphaeroides), this protein is Alpha-1,4-glucan:maltose-1-phosphate maltosyltransferase.